The following is a 298-amino-acid chain: Single myb histone 2 (298 aa).

One can recognise an HTH myb-type domain in the interval Met1–Gly61. Residues Trp28–Ser57 constitute a DNA-binding region (H-T-H motif). Residues Ser124 to Pro192 enclose the H15 domain. Positions Glu237–Leu278 form a coiled coil.

The protein belongs to the histone H1/H5 family. SMH subfamily. As to quaternary structure, forms a homodimer and heterodimers.

It is found in the nucleus. Its subcellular location is the chromosome. It localises to the nucleolus. The protein localises to the telomere. Its function is as follows. Binds preferentially double-stranded telomeric repeats, but may also bind to the single telomeric strand. The protein is Single myb histone 2 (SMH2) of Zea mays (Maize).